A 453-amino-acid chain; its full sequence is Tubulin delta chain (453 aa).

143–149 (AGGTGSG) is a binding site for GTP.

The protein belongs to the tubulin family. Found in a complex with TEDC1, TEDC2, TUBE1 and TUBD1.

It localises to the nucleus. Its subcellular location is the cytoplasm. The protein localises to the cytoskeleton. It is found in the microtubule organizing center. The protein resides in the centrosome. It localises to the centriole. Its subcellular location is the cell projection. The protein localises to the cilium. Acts as a positive regulator of hedgehog signaling and regulates ciliary function. The polypeptide is Tubulin delta chain (TUBD1) (Homo sapiens (Human)).